A 959-amino-acid chain; its full sequence is Translation initiation factor IF-2 (959 aa).

Residues 33-373 (SHASSVEEAD…PVTERKFHEL (341 aa)) are disordered. The segment covering 46-60 (IASSFSAGVTKNVQA) has biased composition (polar residues). Basic and acidic residues predominate over residues 63 to 73 (AKDKQVAEQKA). Residues 76–100 (AKATTPQPAASKAAEKPAAATQEAS) are compositionally biased toward low complexity. Composition is skewed to basic and acidic residues over residues 112-125 (FKAE…EQVA), 134-143 (SNDRKSDYRQ), and 179-192 (NDGH…DKNR). The span at 193-211 (SFNANSRQQDIGRQGQTQA) shows a compositional bias: polar residues. Basic and acidic residues-rich tracts occupy residues 234–258 (ARQR…RQEA) and 266–276 (QTEDKKHREAP). The span at 277-287 (AKATEPAEPVA) shows a compositional bias: low complexity. Residues 306 to 323 (NRPDKAHDRDHGLEDGQK) are compositionally biased toward basic and acidic residues. Low complexity predominate over residues 328 to 346 (SWNSQNQVRNQKNSNWNNN). Residues 347–357 (KKNKKGKHHKN) are compositionally biased toward basic residues. Residues 460–629 (ERAPVVTIMG…LLVAEVEELK (170 aa)) enclose the tr-type G domain. The G1 stretch occupies residues 469–476 (GHVDHGKT). Position 469–476 (469–476 (GHVDHGKT)) interacts with GTP. The G2 stretch occupies residues 494–498 (GITQH). Residues 515 to 518 (DTPG) are G3. Residues 515–519 (DTPGH) and 569–572 (NKID) contribute to the GTP site. A G4 region spans residues 569–572 (NKID). Residues 605 to 607 (SAK) form a G5 region.

It belongs to the TRAFAC class translation factor GTPase superfamily. Classic translation factor GTPase family. IF-2 subfamily.

It localises to the cytoplasm. Functionally, one of the essential components for the initiation of protein synthesis. Protects formylmethionyl-tRNA from spontaneous hydrolysis and promotes its binding to the 30S ribosomal subunits. Also involved in the hydrolysis of GTP during the formation of the 70S ribosomal complex. This is Translation initiation factor IF-2 from Streptococcus equi subsp. zooepidemicus (strain H70).